A 370-amino-acid chain; its full sequence is Phosphate-binding protein PstS2 (370 aa).

Residues 1–22 form the signal peptide; sequence MKFARSGAAVSLLAAGTLVLTA. A lipid anchor (N-palmitoyl cysteine) is attached at C23. Residue C23 is the site of S-diacylglycerol cysteine attachment. Phosphate-binding positions include 54–56, S84, D102, and 191–193; these read STA and SGT.

This sequence belongs to the PstS family. The complex is composed of two ATP-binding proteins (PstB), two transmembrane proteins (PstC and PstA) and a solute-binding protein (PstS).

It is found in the cell membrane. The protein resides in the secreted. Functions in inorganic phosphate uptake, a phosphate-binding protein, although probably not the main uptake protein under phosphate starvation. Part of the ABC transporter complex PstSACB involved in phosphate import. This chain is Phosphate-binding protein PstS2 (pstS2), found in Mycobacterium bovis (strain BCG / Pasteur 1173P2).